A 135-amino-acid chain; its full sequence is C-type lectin PAL (135 aa).

Cystine bridges form between C3-C14, C31-C131, C38-C133, and C106-C123. The 123-residue stretch at 10–132 (MNGLCYKIFD…CGSKNAFLCQ (123 aa)) folds into the C-type lectin domain. 5 residues coordinate Ca(2+): Q96, D98, E104, N119, and D120. The short motif at 96–98 (QPD) is the Galactose-binding element.

Belongs to the true venom lectin family. As to quaternary structure, homodimer; disulfide-linked. In terms of tissue distribution, expressed by the venom gland.

It is found in the secreted. In terms of biological role, galactose-binding lectin which recognizes specific carbohydrate structures and agglutinates a variety of animal cells by binding to cell-surface glycoproteins and glycolipids. This is a calcium-dependent lectin. Shows high hemagglutinating activity (MHC is 0.25 ug/ml on rabbit erythrocytes). This Bitis arietans (African puff adder) protein is C-type lectin PAL.